The following is a 162-amino-acid chain: Cytochrome c-type biogenesis protein CcmE (162 aa).

The Cytoplasmic segment spans residues 1–8 (MNPRRKKR). A helical; Signal-anchor for type II membrane protein membrane pass occupies residues 9 to 29 (LALVVGLIGGVAAVASLLLYA). Residues 30–162 (LNTNLNLFYT…YTETQKGGSR (133 aa)) are Periplasmic-facing. Residues H131 and Y135 each coordinate heme.

This sequence belongs to the CcmE/CycJ family.

The protein resides in the cell inner membrane. In terms of biological role, heme chaperone required for the biogenesis of c-type cytochromes. Transiently binds heme delivered by CcmC and transfers the heme to apo-cytochromes in a process facilitated by CcmF and CcmH. This is Cytochrome c-type biogenesis protein CcmE from Shewanella amazonensis (strain ATCC BAA-1098 / SB2B).